The chain runs to 365 residues: Probable tRNA pseudouridine synthase B (365 aa).

D43 acts as the Nucleophile in catalysis. Positions 209 to 285 constitute a PUA domain; it reads YPKIVVKRSA…DHIFLEADDG (77 aa). Residues 300 to 365 form a disordered region; it reads SGSGLHKDIQ…GKERHGRDHQ (66 aa). Composition is skewed to basic and acidic residues over residues 304-318, 326-336, and 354-365; these read LHKDIQRSEGRKDTR, TGPEKTADRVW, and GGGKERHGRDHQ.

This sequence belongs to the pseudouridine synthase TruB family. Type 2 subfamily.

The catalysed reaction is uridine(55) in tRNA = pseudouridine(55) in tRNA. Its function is as follows. Could be responsible for synthesis of pseudouridine from uracil-55 in the psi GC loop of transfer RNAs. This is Probable tRNA pseudouridine synthase B from Thermoplasma acidophilum (strain ATCC 25905 / DSM 1728 / JCM 9062 / NBRC 15155 / AMRC-C165).